The following is a 282-amino-acid chain: Elongation factor Ts (282 aa).

The interval 79-82 is involved in Mg(2+) ion dislocation from EF-Tu; that stretch reads TDFV.

It belongs to the EF-Ts family.

It is found in the cytoplasm. Its function is as follows. Associates with the EF-Tu.GDP complex and induces the exchange of GDP to GTP. It remains bound to the aminoacyl-tRNA.EF-Tu.GTP complex up to the GTP hydrolysis stage on the ribosome. The chain is Elongation factor Ts from Shewanella sediminis (strain HAW-EB3).